A 427-amino-acid chain; its full sequence is UPF0229 protein KPN78578_11640 (427 aa).

The tract at residues 72–109 (RNRVHPGNDHFVQNDRIERPQGGGGGGGSGQGQASADG) is disordered. Over residues 77-90 (PGNDHFVQNDRIER) the composition is skewed to basic and acidic residues. The segment covering 92-102 (QGGGGGGGSGQ) has biased composition (gly residues).

It belongs to the UPF0229 family.

The chain is UPF0229 protein KPN78578_11640 from Klebsiella pneumoniae subsp. pneumoniae (strain ATCC 700721 / MGH 78578).